We begin with the raw amino-acid sequence, 330 residues long: ADP-L-glycero-D-manno-heptose-6-epimerase (330 aa).

Residues 11-12 (FI), 32-33 (DN), K39, K54, 75-79 (EGACS), and N92 each bind NADP(+). The active-site Proton acceptor is Y139. NADP(+) is bound at residue K143. N168 is a binding site for substrate. Residues V169 and K177 each coordinate NADP(+). The active-site Proton acceptor is the K177. Substrate is bound by residues R179, H186, 200–203 (FGEY), R213, and Y292.

It belongs to the NAD(P)-dependent epimerase/dehydratase family. HldD subfamily. In terms of assembly, homopentamer. The cofactor is NADP(+).

It catalyses the reaction ADP-D-glycero-beta-D-manno-heptose = ADP-L-glycero-beta-D-manno-heptose. It participates in nucleotide-sugar biosynthesis; ADP-L-glycero-beta-D-manno-heptose biosynthesis; ADP-L-glycero-beta-D-manno-heptose from D-glycero-beta-D-manno-heptose 7-phosphate: step 4/4. In terms of biological role, catalyzes the interconversion between ADP-D-glycero-beta-D-manno-heptose and ADP-L-glycero-beta-D-manno-heptose via an epimerization at carbon 6 of the heptose. The sequence is that of ADP-L-glycero-D-manno-heptose-6-epimerase from Burkholderia thailandensis (strain ATCC 700388 / DSM 13276 / CCUG 48851 / CIP 106301 / E264).